The sequence spans 477 residues: Probable malate:quinone oxidoreductase (477 aa).

It belongs to the MQO family. FAD is required as a cofactor.

The enzyme catalyses (S)-malate + a quinone = a quinol + oxaloacetate. It participates in carbohydrate metabolism; tricarboxylic acid cycle; oxaloacetate from (S)-malate (quinone route): step 1/1. This is Probable malate:quinone oxidoreductase from Synechococcus sp. (strain RCC307).